Reading from the N-terminus, the 1008-residue chain is Kinesin-like protein KIN-5C (1008 aa).

The Kinesin motor domain maps to 12-359; the sequence is NVQVLLRCRP…LDYAHRAKSI (348 aa). 98-105 contributes to the ATP binding site; the sequence is GQTGTGKT. Positions 402–459 form a coiled coil; it reads KDRYQQEENERKAMADQIEQMTTSLEANQKQINDLQEKYDSELQHSADLSKKLEATEK. Disordered regions lie at residues 910 to 931, 943 to 962, and 975 to 1008; these read VEAH…TAGI, YKDY…EVPS, and ESLM…TINN. Residues 913 to 925 show a composition bias toward basic and acidic residues; it reads HLGESQHLQESHS. Basic and acidic residues predominate over residues 979-995; the sequence is DEFRENHPYEPSKDRRP.

The protein belongs to the TRAFAC class myosin-kinesin ATPase superfamily. Kinesin family. KIN-5/BimC subfamily.

It localises to the cytoplasm. It is found in the cytoskeleton. The protein localises to the spindle. Its function is as follows. Responsible for microtubule translocation. May be important for the organization of phragmoplast-specific arrays of microtubules. Plays an essential role in stabilizing the mitotic spindle. Required during mitotic cytokinesis. In Oryza sativa subsp. japonica (Rice), this protein is Kinesin-like protein KIN-5C.